A 204-amino-acid chain; its full sequence is E3 ubiquitin-protein ligase MPSR1 (204 aa).

The RING-type; atypical zinc-finger motif lies at 113–154 (CVICLEEWKSEETVKEMPCKHRFHGGCIEKWLGFHGSCPVCR).

In terms of processing, autoubiquitinated.

The protein localises to the cytoplasm. It carries out the reaction S-ubiquitinyl-[E2 ubiquitin-conjugating enzyme]-L-cysteine + [acceptor protein]-L-lysine = [E2 ubiquitin-conjugating enzyme]-L-cysteine + N(6)-ubiquitinyl-[acceptor protein]-L-lysine.. Its function is as follows. E3 ubiquitin-protein ligase involved in protein quality control (PQC) under proteotoxic stress. Is essential to plant survival under proteotoxic stress. Functions by removing damaged proteins before they form cytotoxic aggregates. Recognizes misfolded proteins selectively and tethers polyubiquitin chains to the proteins directly for subsequent degradation by the 26S proteasome pathway. Targets misfolded proteins independently of cytoplasmic chaperones. Associates with the 26S proteasome and sustains the structural integrity of the proteasome complex at the initial stage of proteotoxic stress. Under normal conditions, MPSR1 becomes highly unstable by its autoubiquitination activity and is stabilized during proteotoxic stress by conjugating ubiquitins on misfolded proteins. The protein is E3 ubiquitin-protein ligase MPSR1 of Arabidopsis thaliana (Mouse-ear cress).